We begin with the raw amino-acid sequence, 610 residues long: Probable pleckstrin homology domain-containing family N member 1 (610 aa).

The interval 1–30 is disordered; it reads MGNSHCVPQAPRRLRASFSRKPSLKGNRED. G2 carries the N-myristoyl glycine lipid modification. Positions 61-100 are interaction with C1QBP; the sequence is TDIPGPEHHPENLEQPFLSVFKKGWRRTPVRNLGKVVHYS. 2 consecutive PH domains span residues 96-192 and 227-324; these read VVHY…MALL and AICA…SRRD. Position 307 is a phosphotyrosine (Y307). Disordered regions lie at residues 327-357, 371-431, 443-473, and 493-610; these read HLPP…SNGR, QSLP…PLPL, LDSG…ATSR, and PGPD…IQWI. Polar residues-rich tracts occupy residues 371 to 380 and 391 to 402; these read QSLPESSVPT and NQTDSNCVSTGQ. Y462 is modified (phosphotyrosine). The segment covering 504-526 has biased composition (low complexity); that stretch reads VSVSVPVSESSSGISSSPGPLGS.

As to quaternary structure, found in a complex with cytochrome c mRNA and various ribosomal proteins. Interacts with C1QBP, ELAVL1 and BID. In terms of processing, phosphorylation is essential for its mitochondrial localization and regulates its interaction with C1QBP. Testis and adipose tissue (at protein level). Ubiquitous.

It localises to the cell membrane. The protein resides in the mitochondrion membrane. The protein localises to the mitochondrion. In terms of biological role, controls the stability of the leptin mRNA harboring an AU-rich element (ARE) in its 3' UTR, in cooperation with the RNA stabilizer ELAVL1. Decreases the stability of the leptin mRNA by antagonizing the function of ELAVL1 by inducing its atypical recruitment from the nucleus to the cytosol. Binds to cardiolipin (CL), phosphatidic acid (PA), phosphatidylinositol 4-phosphate (PtdIns(4)P) and phosphatidylserine (PS). This is Probable pleckstrin homology domain-containing family N member 1 (Plekhn1) from Mus musculus (Mouse).